Consider the following 158-residue polypeptide: Putative pre-16S rRNA nuclease (158 aa).

The segment at 138–158 (ELKPAQQTASRSGAGAGDGGS) is disordered.

The protein belongs to the YqgF nuclease family.

It is found in the cytoplasm. Its function is as follows. Could be a nuclease involved in processing of the 5'-end of pre-16S rRNA. The sequence is that of Putative pre-16S rRNA nuclease from Synechococcus sp. (strain CC9605).